Reading from the N-terminus, the 105-residue chain is Replication restart protein PriB (105 aa).

Positions 1 to 102 (MTANRLTLSG…LHAEQIELID (102 aa)) constitute an SSB domain.

Belongs to the PriB family. In terms of assembly, homodimer. Interacts with PriA and DnaT. Component of the replication restart primosome. Primosome assembly occurs via a 'hand-off' mechanism. PriA binds to replication forks, subsequently PriB then DnaT bind; DnaT then displaces ssDNA to generate the helicase loading substrate.

Its function is as follows. Involved in the restart of stalled replication forks, which reloads the replicative helicase on sites other than the origin of replication; the PriA-PriB pathway is the major replication restart pathway. During primosome assembly it facilitates complex formation between PriA and DnaT on DNA; stabilizes PriA on DNA. Stimulates the DNA unwinding activity of PriA helicase. This chain is Replication restart protein PriB, found in Erwinia tasmaniensis (strain DSM 17950 / CFBP 7177 / CIP 109463 / NCPPB 4357 / Et1/99).